Here is a 468-residue protein sequence, read N- to C-terminus: 3-isopropylmalate dehydratase large subunit (468 aa).

Cysteine 349, cysteine 409, and cysteine 412 together coordinate [4Fe-4S] cluster.

It belongs to the aconitase/IPM isomerase family. LeuC type 1 subfamily. As to quaternary structure, heterodimer of LeuC and LeuD. [4Fe-4S] cluster is required as a cofactor.

The enzyme catalyses (2R,3S)-3-isopropylmalate = (2S)-2-isopropylmalate. It functions in the pathway amino-acid biosynthesis; L-leucine biosynthesis; L-leucine from 3-methyl-2-oxobutanoate: step 2/4. Catalyzes the isomerization between 2-isopropylmalate and 3-isopropylmalate, via the formation of 2-isopropylmaleate. The polypeptide is 3-isopropylmalate dehydratase large subunit (Ruegeria pomeroyi (strain ATCC 700808 / DSM 15171 / DSS-3) (Silicibacter pomeroyi)).